Reading from the N-terminus, the 382-residue chain is Serine/threonine-protein kinase (382 aa).

A compositionally biased stretch (basic and acidic residues) spans 1–10; the sequence is MENKQCDHLT. The disordered stretch occupies residues 1–75; it reads MENKQCDHLT…ASESDEDDDD (75 aa). Residues 12-24 show a composition bias toward polar residues; sequence WFSTTSDASESMD. The span at 45–75 shows a compositional bias: acidic residues; the sequence is ADEDLYSDISEGDLEYSDCDSASESDEDDDD. The region spanning 93-379 is the Protein kinase domain; that stretch reads YTVIKTLTPG…AEELLSYPMF (287 aa). ATP is bound by residues 99 to 107 and Lys-122; that span reads LTPGSEGRV. Asp-207 serves as the catalytic Proton acceptor.

Belongs to the protein kinase superfamily. Ser/Thr protein kinase family.

It catalyses the reaction L-seryl-[protein] + ATP = O-phospho-L-seryl-[protein] + ADP + H(+). The enzyme catalyses L-threonyl-[protein] + ATP = O-phospho-L-threonyl-[protein] + ADP + H(+). This chain is Serine/threonine-protein kinase (US2), found in Equus caballus (Horse).